Consider the following 59-residue polypeptide: MANTVKVTLIKSTNGRLANHKACVKGLGLRRIGHTVEVLDTPENRGMINKAYYLLKVEG.

Belongs to the universal ribosomal protein uL30 family. As to quaternary structure, part of the 50S ribosomal subunit.

The protein is Large ribosomal subunit protein uL30 of Ectopseudomonas mendocina (strain ymp) (Pseudomonas mendocina).